A 242-amino-acid chain; its full sequence is UPF0309 protein BSUIS_B0903 (242 aa).

One can recognise an SIS domain in the interval 30 to 214 (AADLIAAAAR…ARLVGEGDAP (185 aa)).

Belongs to the UPF0309 family.

The polypeptide is UPF0309 protein BSUIS_B0903 (Brucella suis (strain ATCC 23445 / NCTC 10510)).